We begin with the raw amino-acid sequence, 438 residues long: Plasmalemma vesicle-associated protein (438 aa).

At 1–26 (MGLSMDRSPYSRTGDRDRGCWYYLRY) the chain is on the cytoplasmic side. The chain crosses the membrane as a helical; Signal-anchor for type II membrane protein span at residues 27 to 47 (FFLFVSLIQFLIILGLVLFMI). At 48–438 (YGNVHATTES…LVNPAVPPSG (391 aa)) the chain is on the extracellular side. N-linked (GlcNAc...) asparagine glycans are attached at residues Asn-82, Asn-88, Asn-112, and Asn-150. The stretch at 289–383 (AGIERVTREN…TEVDVRISAL (95 aa)) forms a coiled coil. A disordered region spans residues 393–438 (PAIQPRLPGPPPNPPPIDPASLEEFKKRILESQRPPLVNPAVPPSG). Pro residues-rich tracts occupy residues 399–410 (LPGPPPNPPPID) and 429–438 (LVNPAVPPSG).

As to quaternary structure, homodimer. As to expression, expressed in lung (alveolar endothelial and bronchial epithelial cells), kidney (endothelium of peritubular capillaries), spleen, liver, adrenal (endothelial cells of the zona reticularis of the cortex and chromaffin cells in the medulla), pancreas (islets of Langerhans), testis (germ cells, interstitial cells in neonatal testis and spermatids), ovary (stromal endothelial, thecal layer of developing follicles, luteal cells within the corpus luteum), intestine (endothelium of capillaries of the intestinal villi) and pituitary (pituicyte cells in the neural lobe) (at protein level). Expressed in lung, kidney, spleen, liver, adrenal, testis, heart, muscle, pituitary, thyroid and ovary.

The protein resides in the cell membrane. Its subcellular location is the membrane. The protein localises to the caveola. It is found in the cytoplasm. It localises to the perinuclear region. Functionally, endothelial cell-specific membrane protein involved in the formation of the diaphragms that bridge endothelial fenestrae. It is also required for the formation of stomata of caveolae and transendothelial channels. Functions in microvascular permeability, endothelial fenestrae contributing to the passage of water and solutes and regulating transcellular versus paracellular flow in different organs. Plays a specific role in embryonic development. In Rattus norvegicus (Rat), this protein is Plasmalemma vesicle-associated protein (Plvap).